A 445-amino-acid chain; its full sequence is Flagellum-associated coiled-coil domain-containing protein 1 (445 aa).

A disordered region spans residues 26-47 (PQLPRKNSTGSSKLTPLVPAPK). The span at 30–39 (RKNSTGSSKL) shows a compositional bias: polar residues. Coiled coils occupy residues 122–226 (SRTN…TYQD) and 283–315 (AVFENFIQEKEELLKQHQSDTLQLEELRKTKEV). An N6-acetyllysine modification is found at lysine 376. Residues 387 to 414 (EKYKHTIQILTEENIHLKQKIISKNEEI) adopt a coiled-coil conformation.

It is found in the cytoplasm. It localises to the cytoplasmic granule. The protein resides in the cell projection. The protein localises to the cilium. Its subcellular location is the flagellum. This chain is Flagellum-associated coiled-coil domain-containing protein 1, found in Homo sapiens (Human).